The following is a 250-amino-acid chain: NH(3)-dependent NAD(+) synthetase (250 aa).

ATP is bound at residue 31-38; the sequence is GISGGIDS. Asp-37 serves as a coordination point for Mg(2+). Arg-122 lines the deamido-NAD(+) pocket. Thr-142 provides a ligand contact to ATP. Mg(2+) is bound at residue Glu-147. The deamido-NAD(+) site is built by Lys-155 and Asp-162. ATP contacts are provided by Lys-171 and Ser-193. Residue 239–240 coordinates deamido-NAD(+); it reads HK.

Belongs to the NAD synthetase family. In terms of assembly, homodimer.

The enzyme catalyses deamido-NAD(+) + NH4(+) + ATP = AMP + diphosphate + NAD(+) + H(+). The protein operates within cofactor biosynthesis; NAD(+) biosynthesis; NAD(+) from deamido-NAD(+) (ammonia route): step 1/1. Catalyzes the ATP-dependent amidation of deamido-NAD to form NAD. Uses ammonia as a nitrogen source. This Alkaliphilus oremlandii (strain OhILAs) (Clostridium oremlandii (strain OhILAs)) protein is NH(3)-dependent NAD(+) synthetase.